A 480-amino-acid chain; its full sequence is Cytochrome b-c1 complex subunit 1, mitochondrial (480 aa).

Residues 1 to 34 constitute a mitochondrion transit peptide; that stretch reads MAASVVCRAATAGAQVLLRARRSPALLRTPALRS. N6-acetyllysine is present on residues lysine 111 and lysine 138. N6-acetyllysine; alternate is present on lysine 163. An N6-succinyllysine; alternate modification is found at lysine 163. Serine 212 is modified (phosphoserine). Lysine 248 carries the post-translational modification N6-acetyllysine.

It belongs to the peptidase M16 family. UQCRC1/QCR1 subfamily. In terms of assembly, component of the ubiquinol-cytochrome c oxidoreductase (cytochrome b-c1 complex, complex III, CIII), a multisubunit enzyme composed of 11 subunits. The complex is composed of 3 respiratory subunits cytochrome b, cytochrome c1 and Rieske protein UQCRFS1, 2 core protein subunits UQCRC1/QCR1 and UQCRC2/QCR2, and 6 low-molecular weight protein subunits UQCRH/QCR6, UQCRB/QCR7, UQCRQ/QCR8, UQCR10/QCR9, UQCR11/QCR10 and subunit 9, the cleavage product of Rieske protein UQCRFS1. The complex exists as an obligatory dimer and forms supercomplexes (SCs) in the inner mitochondrial membrane with NADH-ubiquinone oxidoreductase (complex I, CI) and cytochrome c oxidase (complex IV, CIV), resulting in different assemblies (supercomplex SCI(1)III(2)IV(1) and megacomplex MCI(2)III(2)IV(2)). Interacts with UQCC6. Interacts with STMP1. Expressed in brain, including substantia nigra, striatum, cortex and cerebellum, and in spinal cord, heart, kidney, liver and muscle.

The protein localises to the mitochondrion inner membrane. In terms of biological role, component of the ubiquinol-cytochrome c oxidoreductase, a multisubunit transmembrane complex that is part of the mitochondrial electron transport chain which drives oxidative phosphorylation. The respiratory chain contains 3 multisubunit complexes succinate dehydrogenase (complex II, CII), ubiquinol-cytochrome c oxidoreductase (cytochrome b-c1 complex, complex III, CIII) and cytochrome c oxidase (complex IV, CIV), that cooperate to transfer electrons derived from NADH and succinate to molecular oxygen, creating an electrochemical gradient over the inner membrane that drives transmembrane transport and the ATP synthase. The cytochrome b-c1 complex catalyzes electron transfer from ubiquinol to cytochrome c, linking this redox reaction to translocation of protons across the mitochondrial inner membrane, with protons being carried across the membrane as hydrogens on the quinol. In the process called Q cycle, 2 protons are consumed from the matrix, 4 protons are released into the intermembrane space and 2 electrons are passed to cytochrome c. The 2 core subunits UQCRC1/QCR1 and UQCRC2/QCR2 are homologous to the 2 mitochondrial-processing peptidase (MPP) subunits beta-MPP and alpha-MPP respectively, and they seem to have preserved their MPP processing properties. May be involved in the in situ processing of UQCRFS1 into the mature Rieske protein and its mitochondrial targeting sequence (MTS)/subunit 9 when incorporated into complex III. Seems to play an important role in the maintenance of proper mitochondrial function in nigral dopaminergic neurons. This is Cytochrome b-c1 complex subunit 1, mitochondrial (UQCRC1) from Homo sapiens (Human).